Consider the following 304-residue polypeptide: Protein YIF1B (304 aa).

At 1 to 146 (MMEYPNQSGF…APRFDINAPD (146 aa)) the chain is on the cytoplasmic side. The tract at residues 21-54 (MRGSAMEPSDPTQLFDDTSSGVNKHEPGRVGKSP) is disordered. Over residues 30-42 (DPTQLFDDTSSGV) the composition is skewed to polar residues. Residues 147-167 (LYIPVMGFITYVLVAGLALGT) traverse the membrane as a helical segment. The Extracellular segment spans residues 168–182 (QNRFSPEILGIQASS). Residues 183 to 203 (ALVWLIIEVLAVLLSLYLVTV) form a helical membrane-spanning segment. Over 204–212 (NTDLTTIDL) the chain is Cytoplasmic. A helical transmembrane segment spans residues 213–233 (VAFSGYKYVGMIVGVVAGLLF). At 234 to 236 (GRT) the chain is on the extracellular side. A helical transmembrane segment spans residues 237–257 (GYYLALLWFCASIFVFTIRTL). Topologically, residues 258–282 (RLKILSEAAAEGRLVRGTKNQLRMY) are cytoplasmic. A helical transmembrane segment spans residues 283–303 (LTMAIAAAQPVFMYWLTFHLV). A topological domain (extracellular) is located at residue Arg304.

Belongs to the YIF1 family.

The protein resides in the endoplasmic reticulum membrane. The protein localises to the golgi apparatus membrane. Its subcellular location is the endoplasmic reticulum-Golgi intermediate compartment membrane. In terms of biological role, functions in endoplasmic reticulum to Golgi vesicle-mediated transport and regulates the proper organization of the endoplasmic reticulum and the Golgi. Plays a key role in targeting to neuronal dendrites receptors such as HTR1A. Plays also a role in primary cilium and sperm flagellum assembly probably through protein transport to these compartments. The sequence is that of Protein YIF1B (yif1b) from Danio rerio (Zebrafish).